The sequence spans 158 residues: Transcription elongation factor GreA (158 aa).

Belongs to the GreA/GreB family.

Its function is as follows. Necessary for efficient RNA polymerase transcription elongation past template-encoded arresting sites. The arresting sites in DNA have the property of trapping a certain fraction of elongating RNA polymerases that pass through, resulting in locked ternary complexes. Cleavage of the nascent transcript by cleavage factors such as GreA or GreB allows the resumption of elongation from the new 3'terminus. GreA releases sequences of 2 to 3 nucleotides. The polypeptide is Transcription elongation factor GreA (Pelobacter propionicus (strain DSM 2379 / NBRC 103807 / OttBd1)).